A 308-amino-acid polypeptide reads, in one-letter code: Lipoyl synthase (308 aa).

C51, C56, C62, C77, C81, C84, and S290 together coordinate [4Fe-4S] cluster. Positions 63–279 constitute a Radical SAM core domain; that stretch reads WSKRHATFMI…ETIAKSKGFL (217 aa).

This sequence belongs to the radical SAM superfamily. Lipoyl synthase family. [4Fe-4S] cluster serves as cofactor.

It localises to the cytoplasm. The enzyme catalyses [[Fe-S] cluster scaffold protein carrying a second [4Fe-4S](2+) cluster] + N(6)-octanoyl-L-lysyl-[protein] + 2 oxidized [2Fe-2S]-[ferredoxin] + 2 S-adenosyl-L-methionine + 4 H(+) = [[Fe-S] cluster scaffold protein] + N(6)-[(R)-dihydrolipoyl]-L-lysyl-[protein] + 4 Fe(3+) + 2 hydrogen sulfide + 2 5'-deoxyadenosine + 2 L-methionine + 2 reduced [2Fe-2S]-[ferredoxin]. It functions in the pathway protein modification; protein lipoylation via endogenous pathway; protein N(6)-(lipoyl)lysine from octanoyl-[acyl-carrier-protein]: step 2/2. Functionally, catalyzes the radical-mediated insertion of two sulfur atoms into the C-6 and C-8 positions of the octanoyl moiety bound to the lipoyl domains of lipoate-dependent enzymes, thereby converting the octanoylated domains into lipoylated derivatives. This is Lipoyl synthase from Pelagibacter ubique (strain HTCC1062).